The following is an 802-amino-acid chain: DSC E3 ubiquitin ligase complex subunit A (802 aa).

A signal peptide spans 1–22 (MDNRGSFFFLLIVFYLLLSSQS). Over 23-381 (RPPLLDQDRE…TGPKIEEYDK (359 aa)) the chain is Lumenal. Residues Asn48, Asn71, Asn115, Asn126, Asn148, and Asn166 are each glycosylated (N-linked (GlcNAc...) asparagine). A helical membrane pass occupies residues 382-402 (YSARLVFIICGVFAAQITLLL). The Cytoplasmic portion of the chain corresponds to 403 to 429 (RQIKEASTPSTRSRISFYTIALMAFGD). A helical membrane pass occupies residues 430 to 450 (AFVLIFILLELYPAVSFLVMA). Topologically, residues 451-453 (TAA) are lumenal. Residues 454-474 (FLTFLSVSYIGMKFMMEIWAV) traverse the membrane as a helical segment. The Cytoplasmic segment spans residues 475-550 (QAPERREQER…QETRNDVGAM (76 aa)). Residues 478-541 (ERREQERRSN…TNRGTTSAAQ (64 aa)) form a disordered region. Positions 532–541 (TNRGTTSAAQ) are enriched in polar residues. Residues 551–571 (YARFYFVLFVMLIISIWSFLW) traverse the membrane as a helical segment. The Lumenal portion of the chain corresponds to 572 to 574 (PNR). Residues 575–595 (LGALYARALAFVYLSFWTPQI) traverse the membrane as a helical segment. Topologically, residues 596-608 (GRNIIRNCRKALR) are cytoplasmic. Residues 609-629 (WDFVIGQSILRLFPFVYFLTV) traverse the membrane as a helical segment. Residues 630-642 (RGNVLFIHPDTTT) lie on the Lumenal side of the membrane. Residues 643-663 (AFALAGWVWIQVWVLASQDIL) traverse the membrane as a helical segment. Over 664 to 802 (GPRFFVPRGW…PICRESIPPV (139 aa)) the chain is Cytoplasmic. The RING-type; atypical zinc finger occupies 732–796 (CAICMQEIEV…RLRLQCPICR (65 aa)).

As to quaternary structure, component of the DSC E3 ubiquitin ligase complex composed of dscA, dscB, dscC and dscD.

The protein localises to the endoplasmic reticulum membrane. It carries out the reaction S-ubiquitinyl-[E2 ubiquitin-conjugating enzyme]-L-cysteine + [acceptor protein]-L-lysine = [E2 ubiquitin-conjugating enzyme]-L-cysteine + N(6)-ubiquitinyl-[acceptor protein]-L-lysine.. It functions in the pathway protein modification; protein ubiquitination. Functionally, catalytic component of the DSC E3 ubiquitin ligase complex which is required for the srbA transcriptional activator proteolytic cleavage to release the soluble transcription factor from the membrane in low oxygen or sterol conditions. Required for growth during hypoxia and triazole drug susceptibility, as well as for virulence in a murine model of invasive pulmonary aspergillosis (IPA). This Aspergillus fumigatus (strain CBS 144.89 / FGSC A1163 / CEA10) (Neosartorya fumigata) protein is DSC E3 ubiquitin ligase complex subunit A.